Consider the following 222-residue polypeptide: Cytidylate kinase (222 aa).

10 to 18 (GPAGAGKST) contacts ATP.

This sequence belongs to the cytidylate kinase family. Type 1 subfamily.

Its subcellular location is the cytoplasm. The enzyme catalyses CMP + ATP = CDP + ADP. It catalyses the reaction dCMP + ATP = dCDP + ADP. This is Cytidylate kinase from Halalkalibacterium halodurans (strain ATCC BAA-125 / DSM 18197 / FERM 7344 / JCM 9153 / C-125) (Bacillus halodurans).